A 296-amino-acid polypeptide reads, in one-letter code: Diguanylate cyclase DgcZ (296 aa).

Zn(2+) contacts are provided by His-22, Cys-52, His-79, and His-83. Residues 157–289 form the GGDEF domain; sequence LNLYLMLLDI…GRNRCMFIDE (133 aa). Positions 165 and 166 each coordinate Mg(2+). Substrate is bound by residues Asn-173, His-178, Asp-182, and 195–200; that span reads WTRDYE. Glu-208 is a binding site for Mg(2+). The Proton acceptor role is filled by Glu-208. 3 residues coordinate substrate: Lys-215, Arg-224, and Arg-228.

As to quaternary structure, homodimer. Mg(2+) serves as cofactor.

It catalyses the reaction 2 GTP = 3',3'-c-di-GMP + 2 diphosphate. It functions in the pathway purine metabolism; 3',5'-cyclic di-GMP biosynthesis. With respect to regulation, allosterically regulated by zinc, which seems to regulate the activity of the catalytic GGDEF domains by impeding their mobility and thus preventing productive encounter of the two GTP substrates. Subject to product inhibition by c-di-GMP at a KI of 44 uM. Catalyzes the synthesis of cyclic-di-GMP (c-di-GMP) via the condensation of 2 GTP molecules. May act as a zinc sensor that controls, via c-di-GMP, post-translational events. Overexpression leads to a strong repression of swimming; swimming returnes to normal when residues 206-207 are both mutated to Ala. Overexpression also leads to a reduction in flagellar abundance and a 20-fold increase in c-di-GMP levels in vivo. Required for aminoglycoside-mediated induction of biofilm formation, it also plays a lesser role in biofilm production in response to other classes of translation inhibitors. The c-di-GMP produced by this enzyme up-regulates poly-GlcNAc production as well as the biofilm synthesis protein PgaD, although c-di-GMP is probably not the main inducing principle. C-di-GMP is a second messenger which controls cell surface-associated traits in bacteria. The protein is Diguanylate cyclase DgcZ of Escherichia coli (strain K12).